The sequence spans 84 residues: UPF0153 protein PA1578.1 (84 aa).

Belongs to the UPF0153 family.

In Pseudomonas aeruginosa (strain ATCC 15692 / DSM 22644 / CIP 104116 / JCM 14847 / LMG 12228 / 1C / PRS 101 / PAO1), this protein is UPF0153 protein PA1578.1.